The primary structure comprises 230 residues: Orotidine 5'-phosphate decarboxylase (230 aa).

Substrate contacts are provided by residues Asp11, Lys34, 61–70 (DLKLHDIPNT), Thr117, Arg179, Gln188, Gly208, and Arg209. Lys63 functions as the Proton donor in the catalytic mechanism.

This sequence belongs to the OMP decarboxylase family. Type 1 subfamily. In terms of assembly, homodimer.

The catalysed reaction is orotidine 5'-phosphate + H(+) = UMP + CO2. Its pathway is pyrimidine metabolism; UMP biosynthesis via de novo pathway; UMP from orotate: step 2/2. Functionally, catalyzes the decarboxylation of orotidine 5'-monophosphate (OMP) to uridine 5'-monophosphate (UMP). In Streptococcus pyogenes serotype M28 (strain MGAS6180), this protein is Orotidine 5'-phosphate decarboxylase.